Reading from the N-terminus, the 64-residue chain is Gallinacin-2 (64 aa).

The signal sequence occupies residues 1-22; sequence MRILYLLFSLLFLALQVSPGLS. A propeptide spanning residues 23–28 is cleaved from the precursor; the sequence is SPRRDM. Intrachain disulfides connect Cys-31–Cys-57, Cys-36–Cys-51, and Cys-41–Cys-58.

In terms of tissue distribution, expressed in circulating heterophil granulocytes and bone marrow (at protein level). Strong expression in the bone marrow, lung and testis. Moderate expression in the bursa and intestine. Low expression in the cloaca, gall bladder, brain, pancreas, trachea, air sacs and spleen. Expressed in the vagina, ovarian stroma and the theca layer of the ovarian follicle, but not in the granulosa layer of the ovarian follicle.

Its subcellular location is the secreted. The protein resides in the cytoplasmic granule. Functionally, potent antibacterial activity against the Gram-negative bacterium E.coli ML-35, and against the Gram-positive bacterium L.monocytogenes EGD. Lacks antifungal activity against C.albicans. In Gallus gallus (Chicken), this protein is Gallinacin-2 (GAL2).